We begin with the raw amino-acid sequence, 398 residues long: Elongation factor Tu (398 aa).

Residues 10-207 (KPHVNIGTIG…TVDEYIPEPE (198 aa)) enclose the tr-type G domain. Residues 19 to 26 (GHVDHGKT) are G1. Position 19–26 (19–26 (GHVDHGKT)) interacts with GTP. Thr26 serves as a coordination point for Mg(2+). Positions 63–67 (GITIN) are G2. A G3 region spans residues 84–87 (DAPG). GTP-binding positions include 84–88 (DAPGH) and 139–142 (NKVD). Residues 139-142 (NKVD) form a G4 region. The tract at residues 177–179 (SAL) is G5.

It belongs to the TRAFAC class translation factor GTPase superfamily. Classic translation factor GTPase family. EF-Tu/EF-1A subfamily. As to quaternary structure, monomer.

Its subcellular location is the cytoplasm. The catalysed reaction is GTP + H2O = GDP + phosphate + H(+). GTP hydrolase that promotes the GTP-dependent binding of aminoacyl-tRNA to the A-site of ribosomes during protein biosynthesis. The protein is Elongation factor Tu of Streptococcus sanguinis (strain SK36).